The primary structure comprises 104 residues: ATP-dependent Clp protease adapter protein ClpS (104 aa).

This sequence belongs to the ClpS family. As to quaternary structure, binds to the N-terminal domain of the chaperone ClpA.

Involved in the modulation of the specificity of the ClpAP-mediated ATP-dependent protein degradation. The protein is ATP-dependent Clp protease adapter protein ClpS of Hydrogenovibrio crunogenus (strain DSM 25203 / XCL-2) (Thiomicrospira crunogena).